The following is a 570-amino-acid chain: Formate--tetrahydrofolate ligase (570 aa).

65–72 (TPFGEGKT) provides a ligand contact to ATP.

The protein belongs to the formate--tetrahydrofolate ligase family.

The catalysed reaction is (6S)-5,6,7,8-tetrahydrofolate + formate + ATP = (6R)-10-formyltetrahydrofolate + ADP + phosphate. It functions in the pathway one-carbon metabolism; tetrahydrofolate interconversion. The sequence is that of Formate--tetrahydrofolate ligase from Shewanella halifaxensis (strain HAW-EB4).